A 383-amino-acid chain; its full sequence is uncharacterized protein (383 aa).

2 disordered regions span residues 27–66 (ENNN…NKKP) and 242–281 (LITT…ITRR). Composition is skewed to low complexity over residues 28-63 (NNNT…NNNN) and 242-275 (LITT…KSSS).

This is an uncharacterized protein from Dictyostelium discoideum (Social amoeba).